A 134-amino-acid polypeptide reads, in one-letter code: MKTMRMNSAFILAFALAAAMLILTEAANTAFVSSACNTQKIPSGSPFNRNLRAMLADLRQNTAFSGYDYKTSRAGSGGAPTAYGRATCKQSISQSDCTACLSNLVNRIFSICNNAIGARVQLVDCFIQYEQRSF.

The N-terminal stretch at 1-26 is a signal peptide; sequence MKTMRMNSAFILAFALAAAMLILTEA. A Gnk2-homologous domain is found at 29–134; sequence TAFVSSACNT…CFIQYEQRSF (106 aa). 3 disulfide bridges follow: cysteine 36-cysteine 112, cysteine 88-cysteine 97, and cysteine 100-cysteine 125. Position 37 (asparagine 37) interacts with alpha-D-mannopyranose. Positions 119 and 130 each coordinate alpha-D-mannopyranose.

In terms of assembly, binds actin in vitro.

It localises to the secreted. Functionally, possesses antifungal activity against F.oxysporum, T.reesei and C.albicans. Weakly inhibits the aspartic acid protease pepsin activity. Exerts antifungal activity against S.cerevisiae and F.culmorum through its carbohydrate-binding specificity. Acts as a lectin that stricly recognizes alpha-1,2-linked mannose moieties and interacts with the yeast cell wall mannan polysaccharide. Can interfere with the fungal actin remodeling resulting to the activation of an actin-dependent cell death. The chain is Antifungal protein ginkbilobin-2 from Ginkgo biloba (Ginkgo).